The following is a 272-amino-acid chain: 5'-AMP-activated protein kinase subunit beta-2 (272 aa).

The disordered stretch occupies residues 1-52 (MGNTTSDRVSGERHGAKAARSEGAGGHAPGKEHKIMVGSTDDPSVFSLPDSK). Ser-39 bears the Phosphoserine mark. Thr-40 is subject to Phosphothreonine. At Ser-69 the chain carries Phosphoserine; by ULK1. Ser-95 and Ser-108 each carry phosphoserine. Position 148 is a phosphothreonine (Thr-148). A phosphoserine mark is found at Ser-158, Ser-170, Ser-174, and Ser-184.

Belongs to the 5'-AMP-activated protein kinase beta subunit family. AMPK is a heterotrimer of an alpha catalytic subunit (PRKAA1 or PRKAA2), a beta (PRKAB1 or PRKAB2) and a gamma non-catalytic subunits (PRKAG1, PRKAG2 or PRKAG3). In terms of processing, phosphorylated when associated with the catalytic subunit (PRKAA1 or PRKAA2). Phosphorylated by ULK1 and ULK2; leading to negatively regulate AMPK activity and suggesting the existence of a regulatory feedback loop between ULK1, ULK2 and AMPK.

In terms of biological role, non-catalytic subunit of AMP-activated protein kinase (AMPK), an energy sensor protein kinase that plays a key role in regulating cellular energy metabolism. In response to reduction of intracellular ATP levels, AMPK activates energy-producing pathways and inhibits energy-consuming processes: inhibits protein, carbohydrate and lipid biosynthesis, as well as cell growth and proliferation. AMPK acts via direct phosphorylation of metabolic enzymes, and by longer-term effects via phosphorylation of transcription regulators. Also acts as a regulator of cellular polarity by remodeling the actin cytoskeleton; probably by indirectly activating myosin. Beta non-catalytic subunit acts as a scaffold on which the AMPK complex assembles, via its C-terminus that bridges alpha (PRKAA1 or PRKAA2) and gamma subunits (PRKAG1, PRKAG2 or PRKAG3). This chain is 5'-AMP-activated protein kinase subunit beta-2 (PRKAB2), found in Homo sapiens (Human).